The following is a 73-amino-acid chain: DNA-directed RNA polymerase subunit omega (73 aa).

Belongs to the RNA polymerase subunit omega family. As to quaternary structure, the RNAP catalytic core consists of 2 alpha, 1 beta, 1 beta' and 1 omega subunit. When a sigma factor is associated with the core the holoenzyme is formed, which can initiate transcription.

It catalyses the reaction RNA(n) + a ribonucleoside 5'-triphosphate = RNA(n+1) + diphosphate. Promotes RNA polymerase assembly. Latches the N- and C-terminal regions of the beta' subunit thereby facilitating its interaction with the beta and alpha subunits. The sequence is that of DNA-directed RNA polymerase subunit omega from Oleidesulfovibrio alaskensis (strain ATCC BAA-1058 / DSM 17464 / G20) (Desulfovibrio alaskensis).